A 100-amino-acid chain; its full sequence is MHLQPREQEKLMIVVAADLARRRQARGLQLNYPEAVAIISYELMEGARDGRSVAELMSWGTTILNRDDVQEGIAEMIPEVQVEATFPDGTKLITVHTPIR.

Belongs to the urease gamma subunit family. In terms of assembly, heterotrimer of UreA (gamma), UreB (beta) and UreC (alpha) subunits. Three heterotrimers associate to form the active enzyme.

The protein resides in the cytoplasm. It catalyses the reaction urea + 2 H2O + H(+) = hydrogencarbonate + 2 NH4(+). The protein operates within nitrogen metabolism; urea degradation; CO(2) and NH(3) from urea (urease route): step 1/1. This chain is Urease subunit gamma, found in Corynebacterium efficiens (strain DSM 44549 / YS-314 / AJ 12310 / JCM 11189 / NBRC 100395).